The following is a 99-amino-acid chain: Integration host factor subunit alpha (99 aa).

Residues F49–D70 are disordered.

Belongs to the bacterial histone-like protein family. As to quaternary structure, heterodimer of an alpha and a beta chain.

This protein is one of the two subunits of integration host factor, a specific DNA-binding protein that functions in genetic recombination as well as in transcriptional and translational control. The sequence is that of Integration host factor subunit alpha from Cronobacter sakazakii (strain ATCC BAA-894) (Enterobacter sakazakii).